Consider the following 463-residue polypeptide: L-seryl-tRNA(Sec) selenium transferase (463 aa).

Position 295 is an N6-(pyridoxal phosphate)lysine (lysine 295).

This sequence belongs to the SelA family. Homodecamer; pentamer of dimers. Binds only one seryl-tRNA(Sec) per dimer. Pyridoxal 5'-phosphate serves as cofactor.

It localises to the cytoplasm. The catalysed reaction is L-seryl-tRNA(Sec) + selenophosphate + H(+) = L-selenocysteinyl-tRNA(Sec) + phosphate. Its pathway is aminoacyl-tRNA biosynthesis; selenocysteinyl-tRNA(Sec) biosynthesis; selenocysteinyl-tRNA(Sec) from L-seryl-tRNA(Sec) (bacterial route): step 1/1. Its function is as follows. Converts seryl-tRNA(Sec) to selenocysteinyl-tRNA(Sec) required for selenoprotein biosynthesis. The protein is L-seryl-tRNA(Sec) selenium transferase of Escherichia coli (strain 55989 / EAEC).